The primary structure comprises 724 residues: Propionyl-CoA carboxylase alpha chain, mitochondrial (724 aa).

A mitochondrion-targeting transit peptide spans 1–48 (MAGQWVRTVALLAARRHWRRSSQQQLLGTLKHAPVYSYQCLVVSRSLS). One can recognise a Biotin carboxylation domain in the interval 58–505 (TFDKILIANR…STKFLSDVYP (448 aa)). Residue lysine 61 is modified to N6-acetyllysine; alternate. Lysine 61 is subject to N6-succinyllysine; alternate. Residue lysine 115 is modified to N6-succinyllysine. Lysine 146 is subject to N6-acetyllysine; alternate. N6-succinyllysine; alternate is present on lysine 146. N6-acetyllysine is present on lysine 150. Lysine 173 is an ATP binding site. Residues 177–374 (KLLAKRAKVN…LVQEMILVAK (198 aa)) enclose the ATP-grasp domain. The residue at position 184 (lysine 184) is an N6-succinyllysine. An N6-acetyllysine; alternate modification is found at lysine 196. An N6-succinyllysine; alternate modification is found at lysine 196. ATP-binding positions include 205 to 266 (AREI…PRHI), glutamate 257, and asparagine 292. Serine 248 bears the Phosphoserine mark. At lysine 258 the chain carries N6-succinyllysine. Lysine 324 carries the post-translational modification N6-acetyllysine; alternate. Position 324 is an N6-succinyllysine; alternate (lysine 324). 3 residues coordinate Mg(2+): glutamate 332, glutamate 345, and asparagine 347. The Mn(2+) site is built by glutamate 332, glutamate 345, and asparagine 347. Residue arginine 349 is part of the active site. 2 positions are modified to N6-succinyllysine: lysine 381 and lysine 403. A biotin-binding site is contributed by phenylalanine 405. N6-acetyllysine is present on lysine 492. Residues lysine 498, lysine 509, lysine 554, and lysine 644 each carry the N6-succinyllysine modification. Residues 645–724 (FMLEKVPKDT…GEGDLLVELE (80 aa)) enclose the Biotinyl-binding domain. At lysine 690 the chain carries N6-biotinyllysine; by HLCS.

The holoenzyme is a dodecamer composed of 6 PCCA/alpha subunits and 6 PCCB/beta subunits. Interacts (via the biotin carboxylation domain) with SIRT4. Interacts with SIRT3 and SIRT5. Mg(2+) is required as a cofactor. The cofactor is Mn(2+). Requires biotin as cofactor. Acetylated. In terms of processing, the biotin cofactor is covalently attached to the C-terminal biotinyl-binding domain and is required for the catalytic activity. Biotinylation is catalyzed by HLCS.

Its subcellular location is the mitochondrion matrix. The catalysed reaction is propanoyl-CoA + hydrogencarbonate + ATP = (S)-methylmalonyl-CoA + ADP + phosphate + H(+). The enzyme catalyses butanoyl-CoA + hydrogencarbonate + ATP = (2S)-ethylmalonyl-CoA + ADP + phosphate + H(+). The protein operates within metabolic intermediate metabolism; propanoyl-CoA degradation; succinyl-CoA from propanoyl-CoA: step 1/3. This is one of the 2 subunits of the biotin-dependent propionyl-CoA carboxylase (PCC), a mitochondrial enzyme involved in the catabolism of odd chain fatty acids, branched-chain amino acids isoleucine, threonine, methionine, and valine and other metabolites. Propionyl-CoA carboxylase catalyzes the carboxylation of propionyl-CoA/propanoyl-CoA to D-methylmalonyl-CoA/(S)-methylmalonyl-CoA. Within the holoenzyme, the alpha subunit catalyzes the ATP-dependent carboxylation of the biotin carried by the biotin carboxyl carrier (BCC) domain, while the beta subunit then transfers the carboxyl group from carboxylated biotin to propionyl-CoA. Propionyl-CoA carboxylase also significantly acts on butyryl-CoA/butanoyl-CoA, which is converted to ethylmalonyl-CoA/(2S)-ethylmalonyl-CoA. Other alternative minor substrates include (2E)-butenoyl-CoA/crotonoyl-CoA. The polypeptide is Propionyl-CoA carboxylase alpha chain, mitochondrial (Mus musculus (Mouse)).